A 492-amino-acid polypeptide reads, in one-letter code: Probable Xaa-Pro aminopeptidase AO090005001240 (492 aa).

The Mn(2+) site is built by aspartate 272, aspartate 283, glutamate 420, and glutamate 459.

It belongs to the peptidase M24B family. Requires Mn(2+) as cofactor.

The catalysed reaction is Release of any N-terminal amino acid, including proline, that is linked to proline, even from a dipeptide or tripeptide.. In terms of biological role, catalyzes the removal of a penultimate prolyl residue from the N-termini of peptides. The protein is Probable Xaa-Pro aminopeptidase AO090005001240 of Aspergillus oryzae (strain ATCC 42149 / RIB 40) (Yellow koji mold).